A 67-amino-acid polypeptide reads, in one-letter code: Putative cytosolic sulfotransferase 2 (67 aa).

A 3'-phosphoadenylyl sulfate-binding site is contributed by 31–33 (RDG).

The protein belongs to the sulfotransferase 1 family.

It localises to the cytoplasm. Its function is as follows. Sulfotransferase that utilizes 3'-phospho-5'-adenylyl sulfate (PAPS) as sulfonate donor. This chain is Putative cytosolic sulfotransferase 2 (SOT2), found in Arabidopsis thaliana (Mouse-ear cress).